Consider the following 793-residue polypeptide: MAPDQSYQYPSPSYESIQTFYDTDEDWPGPRCGHTLTAVFVNNSHQLILFGGSTTAVANHNSSLPEISLDGVTNSVHSFDVLTRKWTRLNPIGDVPSPRACHAAALYGTLILIQGGIGPSGPSDGDVYMLDMTNNKWIKFLVGGETPSPRYGHVMDIAAQRWLVIFSGNNGNEILDDTWALDTRGPFSWDRLNPSGNQPSGRMYASGSSREDGIFLLCGGIDHSGVTLGDTYGLKMDSDNVWTPVPAVAPSPRYQHTAVFGGSKLHVIGGILNRARLIDGEAVVAVLDTETGEWVDTNQPETSASGANRQNQYQLMRRCHHAAASFGSHLYVHGGIREDVLLDDLLVAETSQSSSPEPEEDNPDNYMLLDDYLMDEPKPLSSEPEASSFIMRSTSEIAMDRLAEAHNLPTIENAFYDSAIEGYVPLQHGAETVGNRGGLVRTASLDQSTQDLHKKVISTLLRPKTWTPPANRDFFLSYLEVKHLCDEVEKIFMNEPTLLQLKVPIKVFGDIHGQYGDLMRLFHEYGHPSVEGDITHIDYLFLGDYVDRGQHSLEIIMLLFALKIEYPKNIHLIRGNHESLAMNRIYGFLTECEERMGESYGFEAWLKINQVFDYLPLAALLEKKVLCVHGGIGRAVTIEEIENIERPAFPDTGSMVLKDILWSDPTMNDTVLGIVDNARGEGVVSFGPDIVKAFLERNGLEMILRAHECVIDGFERFADGRLITVFSATNYCGTAQNAGAILVIGRDMVIYPKLIHPHPPPISSSEEDYTDKAWMQELNIEMPPTPARGESSE.

5 Kelch repeats span residues 53-109 (STTA…LYGT), 110-160 (LILI…IAAQ), 214-262 (IFLL…VFGG), 264-314 (KLHV…NQYQ), and 329-388 (HLYV…EASS). Ser395 and Ser444 each carry phosphoserine. Asp510, His512, Asp544, and Asn576 together coordinate Mn(2+). Residue His577 is the Proton donor of the active site. His629 and His707 together coordinate Mn(2+). Ser764 is modified (phosphoserine).

It belongs to the PPP phosphatase family. BSU subfamily. In terms of assembly, interacts with CDG1, CDL1 and ASK7/BIN2. Mn(2+) is required as a cofactor. In terms of processing, phosphorylated at Ser-395 and Ser-444. Phosphorylated at Ser-764 by CDG1 and CDL1. As to expression, mainly expressed in young, elongating tissues. In young seedlings, it is expressed at the base of the hypocotyl, at the tip and most peripheral cell layers of cotyledons, and in the vascular cylinder of roots, particularly in the elongation zone and at the point of emergence of lateral roots. In mature plants, it is still present in the root vasculature, but almost completely absent in fully expanded stems and leaves. In flowers, it is mainly expressed in sepal veins, anther filaments, and in the style, suggesting that BSU1 is expressed in actively growing regions and apparently enriched in vascular tissues.

The protein resides in the nucleus. It carries out the reaction O-phospho-L-seryl-[protein] + H2O = L-seryl-[protein] + phosphate. It catalyses the reaction O-phospho-L-threonyl-[protein] + H2O = L-threonyl-[protein] + phosphate. Its activity is regulated as follows. Activated by phosphorylation at Ser-764 by CDG1. In terms of biological role, phosphatase that acts as a positive regulator of brassinosteroid (BR) signaling. Dephosphorylates BES1, a transcription factor that regulates the expression of BR-response genes, thereby playing an important role in the regulation of response to BRs. Inactivates the negative regulator of BR signaling ASK7/BIN2 by dephosphorylation at 'Tyr-200'. This is Serine/threonine-protein phosphatase BSU1 (BSU1) from Arabidopsis thaliana (Mouse-ear cress).